Reading from the N-terminus, the 419-residue chain is Creatine kinase S-type, mitochondrial (419 aa).

A mitochondrion-targeting transit peptide spans 1-39 (MASIFSKLLTGRNASLLFATMGTSVLTTGYLLNRQKVCA). Residues 40–64 (EVREQPRLFPPSADYPDLRKHNNCM) form a cardiolipin-binding region. One can recognise a Phosphagen kinase N-terminal domain in the interval 46–132 (RLFPPSADYP…FDPVIKLRHN (87 aa)). The Phosphagen kinase C-terminal domain occupies 159-401 (YVLSSRVRTG…NYLVDCEKKL (243 aa)). Residues 162–166 (SSRVR) and histidine 225 each bind ATP. Phosphotyrosine is present on tyrosine 255. ATP contacts are provided by residues arginine 270, arginine 326, 354 to 359 (RGTGGV), and aspartate 369. Threonine 356 is subject to Phosphothreonine.

This sequence belongs to the ATP:guanido phosphotransferase family. In terms of assembly, exists as an octamer composed of four CKMT2 homodimers. Sarcomere-specific. Found only in heart and skeletal muscles.

It localises to the mitochondrion inner membrane. The catalysed reaction is creatine + ATP = N-phosphocreatine + ADP + H(+). Reversibly catalyzes the transfer of phosphate between ATP and various phosphogens (e.g. creatine phosphate). Creatine kinase isoenzymes play a central role in energy transduction in tissues with large, fluctuating energy demands, such as skeletal muscle, heart, brain and spermatozoa. The sequence is that of Creatine kinase S-type, mitochondrial (CKMT2) from Homo sapiens (Human).